A 398-amino-acid polypeptide reads, in one-letter code: Carbamoyl phosphate synthase small chain (398 aa).

The CPSase stretch occupies residues 1–199; it reads MTPAWATEKP…WNEGFGEQAE (199 aa). L-glutamine is bound by residues Ser54, Gly251, and Gly253. Residues 203–391 enclose the Glutamine amidotransferase type-1 domain; that stretch reads HVVAIDYGVK…VNLIREKRGE (189 aa). Cys280 (nucleophile) is an active-site residue. L-glutamine is bound by residues Leu281, Gln284, Asn322, Gly324, and Phe325. Active-site residues include His364 and Glu366.

It belongs to the CarA family. Composed of two chains; the small (or glutamine) chain promotes the hydrolysis of glutamine to ammonia, which is used by the large (or ammonia) chain to synthesize carbamoyl phosphate. Tetramer of heterodimers (alpha,beta)4.

It carries out the reaction hydrogencarbonate + L-glutamine + 2 ATP + H2O = carbamoyl phosphate + L-glutamate + 2 ADP + phosphate + 2 H(+). The catalysed reaction is L-glutamine + H2O = L-glutamate + NH4(+). It functions in the pathway amino-acid biosynthesis; L-arginine biosynthesis; carbamoyl phosphate from bicarbonate: step 1/1. The protein operates within pyrimidine metabolism; UMP biosynthesis via de novo pathway; (S)-dihydroorotate from bicarbonate: step 1/3. Small subunit of the glutamine-dependent carbamoyl phosphate synthetase (CPSase). CPSase catalyzes the formation of carbamoyl phosphate from the ammonia moiety of glutamine, carbonate, and phosphate donated by ATP, constituting the first step of 2 biosynthetic pathways, one leading to arginine and/or urea and the other to pyrimidine nucleotides. The small subunit (glutamine amidotransferase) binds and cleaves glutamine to supply the large subunit with the substrate ammonia. This Mesorhizobium japonicum (strain LMG 29417 / CECT 9101 / MAFF 303099) (Mesorhizobium loti (strain MAFF 303099)) protein is Carbamoyl phosphate synthase small chain.